Here is a 144-residue protein sequence, read N- to C-terminus: Giant hemoglobins B chain (144 aa).

Residues 3–144 (VCGPLQRLKV…LNVITNGIQG (142 aa)) enclose the Globin domain. Residue His96 coordinates heme b.

It belongs to the globin family. Part of giant hemoglobin C1, V1 and V2. This worm has three different extracellular Hbs: two dissolved in the vascular blood, V1 (CA. 3,500 kDa) and V2 (CA. 400 kDa), and one in the coelomic fluid, C1 (CA. 400 kDa). V1 consists of four heme-containing, globin chains (B-E) and four linker chains (L1-L4). V2 consists of six globin chains (A-F) and C1 consists of five globin chains (A-E).

It is found in the secreted. The protein localises to the extracellular space. The polypeptide is Giant hemoglobins B chain (Riftia pachyptila (Vent tube worm)).